An 81-amino-acid chain; its full sequence is Photosystem I iron-sulfur center (81 aa).

2 4Fe-4S ferredoxin-type domains span residues 2–31 and 39–68; these read VHVV…MVPW and IASS…IRVY. 8 residues coordinate [4Fe-4S] cluster: Cys-11, Cys-14, Cys-17, Cys-21, Cys-48, Cys-51, Cys-54, and Cys-58.

As to quaternary structure, the eukaryotic PSI reaction center is composed of at least 11 subunits. Requires [4Fe-4S] cluster as cofactor.

It is found in the plastid. The protein resides in the chloroplast thylakoid membrane. The enzyme catalyses reduced [plastocyanin] + hnu + oxidized [2Fe-2S]-[ferredoxin] = oxidized [plastocyanin] + reduced [2Fe-2S]-[ferredoxin]. Apoprotein for the two 4Fe-4S centers FA and FB of photosystem I (PSI); essential for photochemical activity. FB is the terminal electron acceptor of PSI, donating electrons to ferredoxin. The C-terminus interacts with PsaA/B/D and helps assemble the protein into the PSI complex. Required for binding of PsaD and PsaE to PSI. PSI is a plastocyanin/cytochrome c6-ferredoxin oxidoreductase, converting photonic excitation into a charge separation, which transfers an electron from the donor P700 chlorophyll pair to the spectroscopically characterized acceptors A0, A1, FX, FA and FB in turn. The sequence is that of Photosystem I iron-sulfur center from Cyanidium caldarium (Red alga).